The chain runs to 67 residues: Ubiquinol-cytochrome c reductase complex assembly factor 6 (67 aa).

Over Met-1–Ser-8 the chain is Mitochondrial matrix. A helical; Signal-anchor for type II membrane protein transmembrane segment spans residues Ala-9–Ala-25. Over Gln-26–Gln-67 the chain is Mitochondrial intermembrane.

The protein belongs to the UQCC6 family. In terms of assembly, interacts with UQCRC1. Interacts with UQCRQ. Interacts with UQCC5. Forms a complex, named COMB/coordinator of mitochondrial CYTB biogenesis, composed of UQCC1, UQCC2, UQCC4, UQCC5 and UQCC6; stabilizes nascent cytochrome b/MT-CYB and promotes its membrane insertion. Forms a complex, named COMA, composed of UQCC1, UQCC2 and UQCC4; activates MT-CYB translation. Forms a complex, named COMC, composed of UQCC1, UQCC2; UQCC3 and UQCC4; mediates MT-CYB hemylation and association with the first nuclear-encoded complex III subunit UQCRQ. Interacts with MT-CYB. Highly expressed in brown adipose, cardiac and skeletal muscle (at protein level).

Its subcellular location is the mitochondrion inner membrane. Its function is as follows. Required for the assembly and stability of the mitochondrial ubiquinol-cytochrome c reductase complex (complex III or cytochrome b-c1 complex), a multisubunit transmembrane complex that is part of the mitochondrial electron transport chain (ETC) which drives oxidative phosphorylation. Mediates early complex III biogenesis. Participates in regulating the levels of electron transport chain proteins, and therefore energy supply, in response to changes in energy demand. Also required for cytochrome c oxidase complex (complex IV) assembly. This is Ubiquinol-cytochrome c reductase complex assembly factor 6 from Mus musculus (Mouse).